The chain runs to 187 residues: Shikimate kinase (187 aa).

Position 18-23 (18-23 (GCGKST)) interacts with ATP. Serine 22 contacts Mg(2+). Aspartate 40, arginine 64, and glycine 86 together coordinate substrate. Arginine 128 contributes to the ATP binding site. A substrate-binding site is contributed by arginine 147. Arginine 164 contributes to the ATP binding site.

This sequence belongs to the shikimate kinase family. As to quaternary structure, monomer. Mg(2+) serves as cofactor.

It is found in the cytoplasm. It carries out the reaction shikimate + ATP = 3-phosphoshikimate + ADP + H(+). Its pathway is metabolic intermediate biosynthesis; chorismate biosynthesis; chorismate from D-erythrose 4-phosphate and phosphoenolpyruvate: step 5/7. Functionally, catalyzes the specific phosphorylation of the 3-hydroxyl group of shikimic acid using ATP as a cosubstrate. This chain is Shikimate kinase, found in Rhodopirellula baltica (strain DSM 10527 / NCIMB 13988 / SH1).